A 298-amino-acid chain; its full sequence is Tyrosine recombinase XerC (298 aa).

The Core-binding (CB) domain occupies 2–88 (TDLHTDVERY…ALRSFFDWLV (87 aa)). Positions 109–288 (HLPKNIDVDD…DFQHLASVYD (180 aa)) constitute a Tyr recombinase domain. Catalysis depends on residues Arg148, Lys172, His240, Arg243, and His266. Residue Tyr275 is the O-(3'-phospho-DNA)-tyrosine intermediate of the active site.

It belongs to the 'phage' integrase family. XerC subfamily. As to quaternary structure, forms a cyclic heterotetrameric complex composed of two molecules of XerC and two molecules of XerD, in which XerC interacts with XerD via its C-terminal region, XerD interacts with XerC via its C-terminal region and so on.

Its subcellular location is the cytoplasm. With respect to regulation, ftsK may regulate the catalytic switch between XerC and XerD in the heterotetrameric complex during the two steps of the recombination process. Its function is as follows. Site-specific tyrosine recombinase, which acts by catalyzing the cutting and rejoining of the recombining DNA molecules. Binds cooperatively to specific DNA consensus sequences that are separated from XerD binding sites by a short central region, forming the heterotetrameric XerC-XerD complex that recombines DNA substrates. The complex is essential to convert dimers of the bacterial chromosome into monomers to permit their segregation at cell division. It also contributes to the segregational stability of plasmids. In the complex XerC specifically exchanges the top DNA strands. The chain is Tyrosine recombinase XerC from Shigella dysenteriae serotype 1 (strain Sd197).